The primary structure comprises 160 residues: Serine-protein kinase RsbW (160 aa).

This sequence belongs to the anti-sigma-factor family.

It catalyses the reaction L-seryl-[protein] + ATP = O-phospho-L-seryl-[protein] + ADP + H(+). The enzyme catalyses L-threonyl-[protein] + ATP = O-phospho-L-threonyl-[protein] + ADP + H(+). Functionally, negative regulator of sigma-B activity. Phosphorylates and inactivates its specific antagonist protein, RsbV. Upon phosphorylation of RsbV, RsbW is released and binds to sigma-B, thereby blocking its ability to form an RNA polymerase holoenzyme (E-sigma-B). The polypeptide is Serine-protein kinase RsbW (Bacillus licheniformis).